The primary structure comprises 478 residues: Abscisate beta-glucosyltransferase (478 aa).

Residue H20 is the Proton acceptor of the active site. H20 is a binding site for an anthocyanidin. D108 functions as the Charge relay in the catalytic mechanism. UDP-alpha-D-glucose contacts are provided by A340, Q342, H357, W360, N361, S362, and E365. A380 lines the an anthocyanidin pocket. Positions 381 and 382 each coordinate UDP-alpha-D-glucose.

The protein belongs to the UDP-glycosyltransferase family.

It carries out the reaction 2-cis-(+)-abscisate + UDP-alpha-D-glucose = beta-D-glucopyranosyl cis-(+)-abscisate + UDP. Its function is as follows. Glucosyltransferase involved in the catabolism of abscisic acid (ABA). Adds a glucosyl group at the C-1 position of ABA; (S)-2-trans-abscisate is a better substrate than the natural (+)-S-abscisate or its enantiomer (-)-R-abscisate. No activity with (-)-phaseic acid (PA), methylated-ABA or with other hormones such as jasmonate, zeatin, auxin (IAA) or gibberellin A3 (GA3). The polypeptide is Abscisate beta-glucosyltransferase (AOG) (Phaseolus angularis (Azuki bean)).